Consider the following 23-residue polypeptide: KHTLPDLPYDFGALQPHISAEIM.

The protein belongs to the iron/manganese superoxide dismutase family. As to quaternary structure, homotetramer. Requires Mn(2+) as cofactor.

The protein localises to the mitochondrion matrix. The enzyme catalyses 2 superoxide + 2 H(+) = H2O2 + O2. Destroys superoxide anion radicals which are normally produced within the cells and which are toxic to biological systems. This Aquarana catesbeiana (American bullfrog) protein is Superoxide dismutase [Mn], mitochondrial.